A 1355-amino-acid polypeptide reads, in one-letter code: DNA-directed RNA polymerase subunit beta' (1355 aa).

4 residues coordinate Zn(2+): C219, C293, C300, and C303. The segment at 1331–1355 (AEVEVDDEVDDDYEDDDEDDDDYED) is disordered.

This sequence belongs to the RNA polymerase beta' chain family. RpoC2 subfamily. In terms of assembly, in cyanobacteria the RNAP catalytic core is composed of 2 alpha, 1 beta, 1 beta', 1 gamma and 1 omega subunit. When a sigma factor is associated with the core the holoenzyme is formed, which can initiate transcription. The cofactor is Zn(2+).

It catalyses the reaction RNA(n) + a ribonucleoside 5'-triphosphate = RNA(n+1) + diphosphate. In terms of biological role, DNA-dependent RNA polymerase catalyzes the transcription of DNA into RNA using the four ribonucleoside triphosphates as substrates. This Trichormus variabilis (strain ATCC 29413 / PCC 7937) (Anabaena variabilis) protein is DNA-directed RNA polymerase subunit beta'.